A 538-amino-acid polypeptide reads, in one-letter code: MDTTELTQVEGSMMAVTRLATHPVLTFFAILLVAILLWYMIPYFTSPIRSRRGPLLASLTNYWRMYHAAGGSMHLVSYALHARYGPVVRMAPNYLDLDYPSLISTCLDSHGVWKKTEWHGISGVKLGNKVLYNIFSECNPAEHAQIKKPVAKYFSSTGVSVMEPHINNVLAFFVKQLDDQFTELAGFGKPLKFDEWASFYAWDTIAQSTWSRRAGHLEHAFDFDGMVDTSARVMDYLVTVGMQPSLDRFLDKNPIFRIGPPSFVPVANAAFNHLTKRRSGEDDHDPSKPDFLDCYLDAMKKYPEVVDEPRLMSYILVNVAAGVDTTATTLRAIFYLALKDRRVWEKLEAQILDASFTKLPVSYSQARAVPYLEAVIRESMRLWPGSCFAQERYVPPGGLTLPDGSFVPEGVAVGFNAYVIHRNKNVWGDDAEEFRPERWLQGEDESTERFKDRLRLMNSSDLSFGAGSRKCLGVNFATMEVYKTVATLIAVFEFELADPAREWKVHNSMFPRQSGIDLRIKRREGVTVPLGLDLGKEF.

Residues 24 to 44 traverse the membrane as a helical segment; the sequence is VLTFFAILLVAILLWYMIPYF. Cys-471 contributes to the heme binding site.

Belongs to the cytochrome P450 family. It depends on heme as a cofactor.

The protein localises to the membrane. The protein operates within secondary metabolite biosynthesis; flavonoid biosynthesis. Its function is as follows. Cytochrome P450 monooxygenase; part of the gene cluster that mediates the biosynthesis of chlorflavonin, a fungal flavonoid with acetolactate synthase inhibitory activity. Within the pathway, cfoH is responsible for the hydroxylation of the flavonoid skeleton at position C2'. The pathway begins with the PKS-NRPS hybrid synthetase cfoA that uses benzoic acid or p-hydroxybenzoic acid as a starter unit with four rounds of chain elongation using malonyl-CoA to form the chalcone skeleton. Then, a new type of chalcone isomerase, cfoK, catalyzes the conversion of the chalcone into a flavanone by a histidine-mediated oxa-Michael addition mechanism. The desaturation of flavanone to flavone is catalyzed by a new type of flavone synthase, the flavin mononucleotide (FMN)-dependent oxidoreductase cfoJ. Monooxygenases cfoF, cfoG, and P450 cfoH are responsible for the hydroxylation of the flavonoid skeleton at sites C3, C8, and C2', respectively. Like cfoF, the dehydratase cfoI plays also a role in the hydroxylation of position C3. Methyltransferases cfoB, cfoC, and cfoD then catalyze the methylation of C7-OH, C8-OH, and C3-OH, respectively. Finally, the monooxygenase cfoE is responsible for the chlorination of flavonoid at position C3'. The polypeptide is Cytochrome P450 monooxygenase cfoH (Aspergillus candidus).